A 92-amino-acid chain; its full sequence is Small ribosomal subunit protein uS19c (92 aa).

The protein belongs to the universal ribosomal protein uS19 family.

The protein localises to the plastid. Its subcellular location is the chloroplast. Protein S19 forms a complex with S13 that binds strongly to the 16S ribosomal RNA. This chain is Small ribosomal subunit protein uS19c (rps19), found in Pisum sativum (Garden pea).